We begin with the raw amino-acid sequence, 394 residues long: Nuclear hormone receptor family member nhr-103 (394 aa).

The nuclear receptor DNA-binding region spans 8–83; the sequence is SGPCEICGQK…VGMDSKKFQT (76 aa). The NR C4-type zinc finger occupies 11–31; that stretch reads CEICGQKTSGRHFGVLSCRSC. The NR C4-type; degenerate zinc-finger motif lies at 47–66; sequence QCVKGTCKIFEDGKFNCKQC. The 269-residue stretch at 126 to 394 folds into the NR LBD domain; it reads YLVDMAKNLL…FSHPEMFETT (269 aa).

This sequence belongs to the nuclear hormone receptor family.

It is found in the nucleus. Orphan nuclear receptor. The polypeptide is Nuclear hormone receptor family member nhr-103 (nhr-103) (Caenorhabditis elegans).